The following is a 312-amino-acid chain: Olfactory receptor 2T10 (312 aa).

At 1 to 25 (MRLANQTLGGDFFLLGIFSQISHPG) the chain is on the extracellular side. An N-linked (GlcNAc...) asparagine glycan is attached at Asn-5. The helical transmembrane segment at 26–49 (RLCLLIFSIFLMAVSWNITLILLI) threads the bilayer. Over 50-57 (HIDSSLHT) the chain is Cytoplasmic. A helical transmembrane segment spans residues 58 to 79 (PMYFFINQLSLIDLTYISVTVP). Residues 80–100 (KMLVNQLAKDKTISVLGCGTQ) are Extracellular-facing. Cysteines 97 and 189 form a disulfide. The helical transmembrane segment at 101–120 (MYFYLQLGGAECCLLAAMAY) threads the bilayer. The Cytoplasmic segment spans residues 121 to 139 (DRYVAICHPLRYSVLMSHR). Residues 140–158 (VCLLLASGCWFVGSVDGFM) form a helical membrane-spanning segment. Residues 159-195 (LTPIAMSFPFCRSHEIQHFFCEVPAVLKLSCSDTSLY) lie on the Extracellular side of the membrane. A helical transmembrane segment spans residues 196–219 (KIFMYLCCVIMLLIPVTVISVSYY). Topologically, residues 220–236 (YIILTIHKMNSVEGRKK) are cytoplasmic. The helical transmembrane segment at 237–259 (AFTTCSSHITVVSLFYGAAIYNY) threads the bilayer. At 260 to 272 (MLPSSYQTPEKDM) the chain is on the extracellular side. Residues 273–292 (MSSFFYTILTPVLNPIIYSF) form a helical membrane-spanning segment. The Cytoplasmic portion of the chain corresponds to 293–312 (RNKDVTRALKKMLSVQKPPY).

This sequence belongs to the G-protein coupled receptor 1 family.

The protein localises to the cell membrane. In terms of biological role, odorant receptor. The protein is Olfactory receptor 2T10 (OR2T10) of Homo sapiens (Human).